An 82-amino-acid chain; its full sequence is Small ribosomal subunit protein uS17 (82 aa).

It belongs to the universal ribosomal protein uS17 family. Part of the 30S ribosomal subunit.

Functionally, one of the primary rRNA binding proteins, it binds specifically to the 5'-end of 16S ribosomal RNA. This is Small ribosomal subunit protein uS17 from Nitrobacter winogradskyi (strain ATCC 25391 / DSM 10237 / CIP 104748 / NCIMB 11846 / Nb-255).